Reading from the N-terminus, the 430-residue chain is Nacrein-like protein P2 (430 aa).

Asparagine 27 carries an N-linked (GlcNAc...) asparagine glycan. Positions 33-429 constitute an Alpha-carbonic anhydrase domain; it reads AGFSYDRSIC…KNKVTVYKSF (397 aa). Zn(2+) contacts are provided by histidine 132, histidine 134, and histidine 157. The segment at 201–312 is disordered; sequence DEPDDEECKR…GENGHKHGCR (112 aa). The segment covering 207–219 has biased composition (basic and acidic residues); the sequence is ECKRILKGHHPDN. Over residues 220 to 304 the composition is skewed to low complexity; sequence NENGNGDNGN…NNGENGNNGE (85 aa). 27 repeat units span residues 225-227, 228-230, 231-233, 234-236, 237-239, 240-242, 243-245, 246-248, 249-251, 252-254, 255-257, 258-260, 261-263, 264-266, 267-269, 270-272, 273-275, 276-278, 279-281, 282-284, 285-287, 288-290, 291-293, 294-296, 297-299, 300-301, and 303-305. The interval 225 to 305 is 27 X 3 AA approximate tandem repeats of G-X-N; it reads GDNGNNGYNG…NGENGNNGEN (81 aa). 370–371 is a substrate binding site; sequence TT.

This sequence belongs to the alpha-carbonic anhydrase family. As to quaternary structure, homooligomer; disulfide-linked. May also be disulfide-linked to insoluble organic matrix. Requires Zn(2+) as cofactor. As to expression, expressed in the mantle.

It localises to the secreted. The protein localises to the extracellular space. It is found in the extracellular matrix. It carries out the reaction hydrogencarbonate + H(+) = CO2 + H2O. Its function is as follows. Acts as a negative regulator for calcification in the shells of mollusks. May function both as a calcium concentrator and as a carbonic anhydrase required for production of carbonate ions, which are assembled to CaCO(3) at mineralization sites. Is important for shell formation in both the calcitic prismatic layer and the aragonitic nacreous layer. Shows inhibitory activity of crystal formation when present in free state but, when attached to the insoluble matrix, may regulate the form and size of aragonite crystal. The chain is Nacrein-like protein P2 from Mizuhopecten yessoensis (Japanese scallop).